A 212-amino-acid polypeptide reads, in one-letter code: Ribosome maturation factor RimP (212 aa).

It belongs to the RimP family.

It is found in the cytoplasm. Its function is as follows. Required for maturation of 30S ribosomal subunits. The polypeptide is Ribosome maturation factor RimP (Variovorax paradoxus (strain S110)).